Here is a 201-residue protein sequence, read N- to C-terminus: Small ribosomal subunit protein uS2 (201 aa).

The protein belongs to the universal ribosomal protein uS2 family.

The protein is Small ribosomal subunit protein uS2 of Nanoarchaeum equitans (strain Kin4-M).